Here is a 648-residue protein sequence, read N- to C-terminus: p-hydroxybenzoic acid efflux pump subunit AaeB (648 aa).

The next 11 helical transmembrane spans lie at 11 to 31 (FACK…YFGL), 41 to 61 (AALV…SGAI), 65 to 87 (GWLR…MLLI), 91 to 110 (LLMI…LSSL), 125 to 145 (TALI…QLAL), 150 to 170 (EIVL…PRSV), 369 to 389 (LFWL…IAVV), 406 to 426 (FLMG…LILP), 430 to 450 (QSLV…GMAV), 458 to 478 (MGTL…GFPI), and 481 to 501 (FVDS…VLLV).

This sequence belongs to the aromatic acid exporter ArAE (TC 2.A.85) family.

It is found in the cell inner membrane. Forms an efflux pump with AaeA. Could function as a metabolic relief valve, allowing to eliminate certain compounds when they accumulate to high levels in the cell. The chain is p-hydroxybenzoic acid efflux pump subunit AaeB from Edwardsiella ictaluri (strain 93-146).